The following is a 299-amino-acid chain: Regucalcin (299 aa).

Glutamate 18 is an a divalent metal cation binding site. Residues arginine 101, asparagine 103, and glutamate 121 each contribute to the substrate site. Lysine 144 bears the N6-succinyllysine mark. Asparagine 154 and aspartate 204 together coordinate a divalent metal cation. The Proton donor/acceptor role is filled by aspartate 204. Lysine 244 and lysine 253 each carry N6-succinyllysine.

The protein belongs to the SMP-30/CGR1 family. As to quaternary structure, monomer. The cofactor is Zn(2+). Requires Mn(2+) as cofactor. Ca(2+) serves as cofactor. Mg(2+) is required as a cofactor.

It is found in the cytoplasm. It catalyses the reaction D-glucono-1,5-lactone + H2O = D-gluconate + H(+). Its function is as follows. Gluconolactonase with low activity towards other sugar lactones, including gulonolactone and galactonolactone. Can also hydrolyze diisopropyl phosphorofluoridate and phenylacetate (in vitro). Calcium-binding protein. Modulates Ca(2+) signaling, and Ca(2+)-dependent cellular processes and enzyme activities. The chain is Regucalcin (RGN) from Macaca fascicularis (Crab-eating macaque).